The following is a 545-amino-acid chain: T-complex protein 1 subunit gamma (545 aa).

The residue at position 1 (methionine 1) is an N-acetylmethionine. Residues 1–24 (MMGHRPVLVLSQNTKRESGRKVQS) form a disordered region. Position 11 is a phosphoserine (serine 11). Lysine 15 participates in a covalent cross-link: Glycyl lysine isopeptide (Lys-Gly) (interchain with G-Cter in SUMO2). ADP is bound by residues glycine 42, glycine 94, threonine 95, threonine 96, serine 97, threonine 162, and lysine 163. Glycine 42, glycine 94, threonine 95, and threonine 96 together coordinate ATP. Position 170 is a phosphoserine (serine 170). Lysine 222 is modified (N6-acetyllysine). Serine 243 and serine 244 each carry phosphoserine. Phosphotyrosine is present on tyrosine 247. Residues lysine 248 and lysine 249 each participate in a glycyl lysine isopeptide (Lys-Gly) (interchain with G-Cter in SUMO2) cross-link. Serine 252 carries the post-translational modification Phosphoserine. Cysteine 366 and cysteine 372 are joined by a disulfide. A Glycyl lysine isopeptide (Lys-Gly) (interchain with G-Cter in SUMO2) cross-link involves residue lysine 381. An ADP-binding site is contributed by glycine 411. Residue glycine 411 coordinates ATP. Phosphothreonine occurs at positions 430 and 459. Residues glycine 482, glutamate 483, glutamate 497, and lysine 502 each coordinate ADP. Glycine 482 provides a ligand contact to ATP. Residue glutamate 497 coordinates ATP. The disordered stretch occupies residues 526–545 (HKKKGDDQSRQGGAPDAGQE).

This sequence belongs to the TCP-1 chaperonin family. In terms of assembly, component of the chaperonin-containing T-complex (TRiC), a hexadecamer composed of two identical back-to-back stacked rings enclosing a protein folding chamber. Each ring is made up of eight different subunits: TCP1/CCT1, CCT2, CCT3, CCT4, CCT5, CCT6A/CCT6, CCT7, CCT8. Interacts with PACRG. Interacts with DNAAF4. Interacts with DLEC1.

The protein resides in the cytoplasm. The enzyme catalyses ATP + H2O = ADP + phosphate + H(+). In terms of biological role, component of the chaperonin-containing T-complex (TRiC), a molecular chaperone complex that assists the folding of actin, tubulin and other proteins upon ATP hydrolysis. The TRiC complex mediates the folding of WRAP53/TCAB1, thereby regulating telomere maintenance. As part of the TRiC complex may play a role in the assembly of BBSome, a complex involved in ciliogenesis regulating transports vesicles to the cilia. The chain is T-complex protein 1 subunit gamma (CCT3) from Macaca fascicularis (Crab-eating macaque).